The sequence spans 22 residues: Proline-rich peptide (22 aa).

Residues 1–22 (FVDRNRIPRSNNGPKIPIISNP) are disordered.

Its subcellular location is the secreted. Its function is as follows. Antibacterial peptide active against Gram-positive bacterium M.luteus and Gram-negative bacterium E.coli. The polypeptide is Proline-rich peptide (Calliphora vicina (Blue blowfly)).